Reading from the N-terminus, the 307-residue chain is Glutaminase (307 aa).

Residues S66, N116, E160, N167, Y191, Y243, and V261 each coordinate substrate.

It belongs to the glutaminase family. Homotetramer.

The catalysed reaction is L-glutamine + H2O = L-glutamate + NH4(+). In Saccharophagus degradans (strain 2-40 / ATCC 43961 / DSM 17024), this protein is Glutaminase.